The sequence spans 237 residues: Protein VP5 (237 aa).

Residues 1–148 (MLSIIRRKTR…TKQRCKANLR (148 aa)) lie on the Cytoplasmic side of the membrane. The segment at 84–237 (SSSKDPDISG…SKLGKSRDIC (154 aa)) is disordered. Basic and acidic residues-rich tracts occupy residues 85-97 (SSKDPDISGQKDK) and 116-130 (SRVREHEPIHEHEPI). The helical transmembrane segment at 149–165 (GDSGFVSIGRSNHPKLS) threads the bilayer. The Extracellular segment spans residues 166–237 (REDCHNTRVP…SKLGKSRDIC (72 aa)). The span at 214–231 (RSHRRKKAKTRTKTSKLG) shows a compositional bias: basic residues.

It localises to the host membrane. This Drosophila x virus (isolate Chung/1996) (DXV) protein is Protein VP5 (VP5).